A 566-amino-acid polypeptide reads, in one-letter code: Oxygen-dependent choline dehydrogenase (566 aa).

FAD is bound at residue 7-36 (DYIICGAGSAGNVLATRLTEDPDVTVLLLE). A disordered region spans residues 180–202 (NGYQQEGFGPMDRTVTPKGRRAS). His-474 (proton acceptor) is an active-site residue.

The protein belongs to the GMC oxidoreductase family. It depends on FAD as a cofactor.

The enzyme catalyses choline + A = betaine aldehyde + AH2. It catalyses the reaction betaine aldehyde + NAD(+) + H2O = glycine betaine + NADH + 2 H(+). It participates in amine and polyamine biosynthesis; betaine biosynthesis via choline pathway; betaine aldehyde from choline (cytochrome c reductase route): step 1/1. Involved in the biosynthesis of the osmoprotectant glycine betaine. Catalyzes the oxidation of choline to betaine aldehyde and betaine aldehyde to glycine betaine at the same rate. The chain is Oxygen-dependent choline dehydrogenase from Burkholderia lata (strain ATCC 17760 / DSM 23089 / LMG 22485 / NCIMB 9086 / R18194 / 383).